Consider the following 125-residue polypeptide: Small ribosomal subunit protein uS12m (125 aa).

Disordered stretches follow at residues 1 to 29 (MPTKNQLIRHGREEKQRTDRTRASDQCPQ) and 105 to 125 (LGIPDRRKGRSKYGAERPKSK). A compositionally biased stretch (basic and acidic residues) spans 10–23 (HGREEKQRTDRTRA).

The protein belongs to the universal ribosomal protein uS12 family.

The protein resides in the mitochondrion. In terms of biological role, protein S12 is involved in the translation initiation step. The sequence is that of Small ribosomal subunit protein uS12m (RPS12) from Oryza sativa subsp. japonica (Rice).